Here is a 294-residue protein sequence, read N- to C-terminus: Elongation factor Ts (294 aa).

The tract at residues T80–V83 is involved in Mg(2+) ion dislocation from EF-Tu.

The protein belongs to the EF-Ts family.

The protein localises to the cytoplasm. Its function is as follows. Associates with the EF-Tu.GDP complex and induces the exchange of GDP to GTP. It remains bound to the aminoacyl-tRNA.EF-Tu.GTP complex up to the GTP hydrolysis stage on the ribosome. The polypeptide is Elongation factor Ts (Polynucleobacter asymbioticus (strain DSM 18221 / CIP 109841 / QLW-P1DMWA-1) (Polynucleobacter necessarius subsp. asymbioticus)).